The sequence spans 180 residues: Large ribosomal subunit protein uL5 (180 aa).

The protein belongs to the universal ribosomal protein uL5 family. Part of the 50S ribosomal subunit; part of the 5S rRNA/L5/L18/L25 subcomplex. Contacts the 5S rRNA and the P site tRNA. Forms a bridge to the 30S subunit in the 70S ribosome.

Functionally, this is one of the proteins that bind and probably mediate the attachment of the 5S RNA into the large ribosomal subunit, where it forms part of the central protuberance. In the 70S ribosome it contacts protein S13 of the 30S subunit (bridge B1b), connecting the 2 subunits; this bridge is implicated in subunit movement. Contacts the P site tRNA; the 5S rRNA and some of its associated proteins might help stabilize positioning of ribosome-bound tRNAs. This is Large ribosomal subunit protein uL5 from Symbiobacterium thermophilum (strain DSM 24528 / JCM 14929 / IAM 14863 / T).